Consider the following 607-residue polypeptide: Chaperone protein DnaK (607 aa).

Phosphothreonine; by autocatalysis is present on Thr-174. Positions 577–607 (GYTASGPQGGPNPGGGQSGPDGNVNTDYKVY) are disordered. Residues 583 to 595 (PQGGPNPGGGQSG) are compositionally biased toward gly residues.

This sequence belongs to the heat shock protein 70 family.

Its function is as follows. Acts as a chaperone. This Caldicellulosiruptor bescii (strain ATCC BAA-1888 / DSM 6725 / KCTC 15123 / Z-1320) (Anaerocellum thermophilum) protein is Chaperone protein DnaK.